Here is a 292-residue protein sequence, read N- to C-terminus: MNKPFNCIGIVGHPRHPTALATHEMLYHWLTEKGYSVLIEQQIARELNLKDAPTGSLADIGQQADLAVVVGGDGNMLGAARVLSRYDIKVIGVNRGNLGFLTDLDPDHAQQQLSDVLDGHYLSEQRFMLEAHVCRTNQPDSISTAINEVVLHPGKVAHMIEFEVYIDDRFAFSQRSDGLIIATPTGSTAYSLSAGGPILTPSLEAIALVPMFPHTLSARPLVINSSSTIRLKFSCITNDLEISCDSQIALPVQEGEEVLIRRSEHHLNLIHPKNYSYFNTLSSKLGWSKKLF.

The active-site Proton acceptor is Asp73. NAD(+)-binding positions include 73 to 74 (DG), 147 to 148 (NE), His158, Arg175, Asp177, 188 to 193 (TAYSLS), and Gln247.

This sequence belongs to the NAD kinase family. It depends on a divalent metal cation as a cofactor.

The protein resides in the cytoplasm. It carries out the reaction NAD(+) + ATP = ADP + NADP(+) + H(+). In terms of biological role, involved in the regulation of the intracellular balance of NAD and NADP, and is a key enzyme in the biosynthesis of NADP. Catalyzes specifically the phosphorylation on 2'-hydroxyl of the adenosine moiety of NAD to yield NADP. The polypeptide is NAD kinase (Pectobacterium atrosepticum (strain SCRI 1043 / ATCC BAA-672) (Erwinia carotovora subsp. atroseptica)).